We begin with the raw amino-acid sequence, 174 residues long: UPF0340 protein MW2038 (174 aa).

Belongs to the UPF0340 family.

This Staphylococcus aureus (strain MW2) protein is UPF0340 protein MW2038.